A 193-amino-acid polypeptide reads, in one-letter code: RNA pyrophosphohydrolase (193 aa).

A Nudix hydrolase domain is found at 6–149 (GFRPNVGIIL…KRDVYQRALQ (144 aa)). The Nudix box signature appears at 38–59 (GGIKFGETPEQAMFRELEEEVG). The interval 174–193 (THSARKTDEPSTEQTKPNNE) is disordered.

The protein belongs to the Nudix hydrolase family. RppH subfamily. A divalent metal cation is required as a cofactor.

Accelerates the degradation of transcripts by removing pyrophosphate from the 5'-end of triphosphorylated RNA, leading to a more labile monophosphorylated state that can stimulate subsequent ribonuclease cleavage. The sequence is that of RNA pyrophosphohydrolase from Herminiimonas arsenicoxydans.